A 1429-amino-acid chain; its full sequence is Gag-Pol polyprotein (1429 aa).

Gly-2 carries the N-myristoyl glycine; by host lipid modification. Positions 7-31 (VLSGGKLDKWEKIQLRPGGKKKYRL) are interaction with Gp41. Positions 8–43 (LSGGKLDKWEKIQLRPGGKKKYRLKHLVWASRELER) are interaction with host CALM1. The tract at residues 12–19 (KLDKWEKI) is interaction with host AP3D1. The segment at 14–33 (DKWEKIQLRPGGKKKYRLKH) is interaction with membrane phosphatidylinositol 4,5-bisphosphate and RNA. Positions 16–22 (WEKIQLR) match the Nuclear export signal motif. The short motif at 26-32 (KKKYRLK) is the Nuclear localization signal element. The segment at 73-77 (EELRS) is interaction with membrane phosphatidylinositol 4,5-bisphosphate. Positions 105-124 (EEEQNRTQQKTQQGKADKGV) are disordered. Over residues 110-124 (RTQQKTQQGKADKGV) the composition is skewed to polar residues. Tyr-128 is modified (phosphotyrosine; by host). Residues 185–223 (NTVGGHQAAMQMLKDTINEEAAEWDRMHPVQAGPIPPGQ) are interaction with human PPIA/CYPA and NUP153. The tract at residues 273 to 359 (YSPVSILDIR…GGPGHKARVL (87 aa)) is dimerization/Multimerization of capsid protein p24. 2 consecutive CCHC-type zinc fingers follow at residues 385 to 402 (IKCF…NCRA) and 406 to 423 (KGCW…DCSE). The segment at 439 to 479 (EARKFSSEQTRANSPTSRELWVRGEDNPLSETGNERSGTGS) is disordered. Composition is skewed to polar residues over residues 445-455 (SEQTRANSPTS) and 467-479 (LSET…GTGS). Residues 484-488 (PQITL) form a dimerization of protease region. The region spanning 503 to 572 (REALLDTGAD…TPVNIIGRNM (70 aa)) is the Peptidase A2 domain. Asp-508 acts as the For protease activity; shared with dimeric partner in catalysis. Dimerization of protease regions lie at residues 532–538 (GIGGFIK) and 571–583 (NMLT…LNFP). In terms of domain architecture, Reverse transcriptase spans 626–816 (EGKISKIGPE…PPFLWMGYEL (191 aa)). Residues Asp-692, Asp-767, and Asp-768 each coordinate Mg(2+). An RT 'primer grip' region spans residues 809–817 (FLWMGYELH). A Tryptophan repeat motif motif is present at residues 980-996 (WGTWWTEYWQATWIPEW). Residues 1016-1139 (IVGAETFYVD…VDKLVSSGIR (124 aa)) enclose the RNase H type-1 domain. Asp-1025, Glu-1060, Asp-1080, and Asp-1131 together coordinate Mg(2+). Residues 1145-1186 (DGIDKAQEEHEKYHNNWRAMASDFNLPPVVAKEIVASCDKCQ) form an Integrase-type zinc finger. The Zn(2+) site is built by His-1154, His-1158, Cys-1182, and Cys-1185. Residues 1196-1346 (VDCSPGIWQL…SAGERIIDII (151 aa)) form the Integrase catalytic domain. Mg(2+)-binding residues include Asp-1206, Asp-1258, and Glu-1294. Positions 1365–1411 (FRVYYRDSREPIWKGPAKLLWKGEGAVVIQNSEIKVVPRRKAKIIRD) form a DNA-binding region, integrase-type.

As to quaternary structure, homotrimer; further assembles as hexamers of trimers. Interacts with gp41 (via C-terminus). Interacts with host CALM1; this interaction induces a conformational change in the Matrix protein, triggering exposure of the myristate group. Interacts with host AP3D1; this interaction allows the polyprotein trafficking to multivesicular bodies during virus assembly. Part of the pre-integration complex (PIC) which is composed of viral genome, matrix protein, Vpr and integrase. Homodimer; the homodimer further multimerizes as homohexamers or homopentamers. Interacts with human PPIA/CYPA; This interaction stabilizes the capsid. Interacts with human NUP153. Interacts with host PDZD8; this interaction stabilizes the capsid. Interacts with monkey TRIM5; this interaction destabilizes the capsid. In terms of assembly, homodimer, whose active site consists of two apposed aspartic acid residues. As to quaternary structure, heterodimer of p66 RT and p51 RT (RT p66/p51). Heterodimerization of RT is essential for DNA polymerase activity. The overall folding of the subdomains is similar in p66 RT and p51 RT but the spatial arrangements of the subdomains are dramatically different. Homotetramer; may further associate as a homohexadecamer. Part of the pre-integration complex (PIC) which is composed of viral genome, matrix protein, Vpr and integrase. Interacts with human SMARCB1/INI1 and human PSIP1/LEDGF isoform 1. Interacts with human KPNA3; this interaction might play a role in nuclear import of the pre-integration complex. Interacts with human NUP153; this interaction might play a role in nuclear import of the pre-integration complex. Requires Mg(2+) as cofactor. Specific enzymatic cleavages by the viral protease yield mature proteins. The protease is released by autocatalytic cleavage. The polyprotein is cleaved during and after budding, this process is termed maturation. Proteolytic cleavage of p66 RT removes the RNase H domain to yield the p51 RT subunit. Nucleocapsid protein p7 might be further cleaved after virus entry. In terms of processing, tyrosine phosphorylated presumably in the virion by a host kinase. Phosphorylation is apparently not a major regulator of membrane association. Post-translationally, phosphorylated possibly by host MAPK1; this phosphorylation is necessary for Pin1-mediated virion uncoating. Methylated by host PRMT6, impairing its function by reducing RNA annealing and the initiation of reverse transcription.

The protein resides in the host cell membrane. The protein localises to the host endosome. It is found in the host multivesicular body. Its subcellular location is the virion membrane. It localises to the host nucleus. The protein resides in the host cytoplasm. The protein localises to the virion. The enzyme catalyses Specific for a P1 residue that is hydrophobic, and P1' variable, but often Pro.. It carries out the reaction Endohydrolysis of RNA in RNA/DNA hybrids. Three different cleavage modes: 1. sequence-specific internal cleavage of RNA. Human immunodeficiency virus type 1 and Moloney murine leukemia virus enzymes prefer to cleave the RNA strand one nucleotide away from the RNA-DNA junction. 2. RNA 5'-end directed cleavage 13-19 nucleotides from the RNA end. 3. DNA 3'-end directed cleavage 15-20 nucleotides away from the primer terminus.. It catalyses the reaction 3'-end directed exonucleolytic cleavage of viral RNA-DNA hybrid.. The catalysed reaction is DNA(n) + a 2'-deoxyribonucleoside 5'-triphosphate = DNA(n+1) + diphosphate. Protease: The viral protease is inhibited by many synthetic protease inhibitors (PIs), such as amprenavir, atazanavir, indinavir, loprinavir, nelfinavir, ritonavir and saquinavir. Use of protease inhibitors in tritherapy regimens permit more ambitious therapeutic strategies. Reverse transcriptase/ribonuclease H: RT can be inhibited either by nucleoside RT inhibitors (NRTIs) or by non nucleoside RT inhibitors (NNRTIs). NRTIs act as chain terminators, whereas NNRTIs inhibit DNA polymerization by binding a small hydrophobic pocket near the RT active site and inducing an allosteric change in this region. Classical NRTIs are abacavir, adefovir (PMEA), didanosine (ddI), lamivudine (3TC), stavudine (d4T), tenofovir (PMPA), zalcitabine (ddC), and zidovudine (AZT). Classical NNRTIs are atevirdine (BHAP U-87201E), delavirdine, efavirenz (DMP-266), emivirine (I-EBU), and nevirapine (BI-RG-587). The tritherapies used as a basic effective treatment of AIDS associate two NRTIs and one NNRTI. In terms of biological role, mediates, with Gag polyprotein, the essential events in virion assembly, including binding the plasma membrane, making the protein-protein interactions necessary to create spherical particles, recruiting the viral Env proteins, and packaging the genomic RNA via direct interactions with the RNA packaging sequence (Psi). Gag-Pol polyprotein may regulate its own translation, by the binding genomic RNA in the 5'-UTR. At low concentration, the polyprotein would promote translation, whereas at high concentration, the polyprotein would encapsidate genomic RNA and then shut off translation. Targets the polyprotein to the plasma membrane via a multipartite membrane-binding signal, that includes its myristoylated N-terminus. Matrix protein is part of the pre-integration complex. Implicated in the release from host cell mediated by Vpu. Binds to RNA. Functionally, forms the conical core that encapsulates the genomic RNA-nucleocapsid complex in the virion. Most core are conical, with only 7% tubular. The core is constituted by capsid protein hexamer subunits. The core is disassembled soon after virion entry. Host restriction factors such as TRIM5-alpha or TRIMCyp bind retroviral capsids and cause premature capsid disassembly, leading to blocks in reverse transcription. Capsid restriction by TRIM5 is one of the factors which restricts HIV-1 to the human species. Host PIN1 apparently facilitates the virion uncoating. On the other hand, interactions with PDZD8 or CYPA stabilize the capsid. Its function is as follows. Encapsulates and protects viral dimeric unspliced genomic RNA (gRNA). Binds these RNAs through its zinc fingers. Acts as a nucleic acid chaperone which is involved in rearangement of nucleic acid secondary structure during gRNA retrotranscription. Also facilitates template switch leading to recombination. As part of the polyprotein, participates in gRNA dimerization, packaging, tRNA incorporation and virion assembly. In terms of biological role, aspartyl protease that mediates proteolytic cleavages of Gag and Gag-Pol polyproteins during or shortly after the release of the virion from the plasma membrane. Cleavages take place as an ordered, step-wise cascade to yield mature proteins. This process is called maturation. Displays maximal activity during the budding process just prior to particle release from the cell. Also cleaves Nef and Vif, probably concomitantly with viral structural proteins on maturation of virus particles. Hydrolyzes host EIF4GI and PABP1 in order to shut off the capped cellular mRNA translation. The resulting inhibition of cellular protein synthesis serves to ensure maximal viral gene expression and to evade host immune response. Also mediates cleavage of host YTHDF3. Mediates cleavage of host CARD8, thereby activating the CARD8 inflammasome, leading to the clearance of latent HIV-1 in patient CD4(+) T-cells after viral reactivation; in contrast, HIV-1 can evade CARD8-sensing when its protease remains inactive in infected cells prior to viral budding. Multifunctional enzyme that converts the viral RNA genome into dsDNA in the cytoplasm, shortly after virus entry into the cell. This enzyme displays a DNA polymerase activity that can copy either DNA or RNA templates, and a ribonuclease H (RNase H) activity that cleaves the RNA strand of RNA-DNA heteroduplexes in a partially processive 3' to 5' endonucleasic mode. Conversion of viral genomic RNA into dsDNA requires many steps. A tRNA(3)-Lys binds to the primer-binding site (PBS) situated at the 5'-end of the viral RNA. RT uses the 3' end of the tRNA primer to perform a short round of RNA-dependent minus-strand DNA synthesis. The reading proceeds through the U5 region and ends after the repeated (R) region which is present at both ends of viral RNA. The portion of the RNA-DNA heteroduplex is digested by the RNase H, resulting in a ssDNA product attached to the tRNA primer. This ssDNA/tRNA hybridizes with the identical R region situated at the 3' end of viral RNA. This template exchange, known as minus-strand DNA strong stop transfer, can be either intra- or intermolecular. RT uses the 3' end of this newly synthesized short ssDNA to perform the RNA-dependent minus-strand DNA synthesis of the whole template. RNase H digests the RNA template except for two polypurine tracts (PPTs) situated at the 5'-end and near the center of the genome. It is not clear if both polymerase and RNase H activities are simultaneous. RNase H probably can proceed both in a polymerase-dependent (RNA cut into small fragments by the same RT performing DNA synthesis) and a polymerase-independent mode (cleavage of remaining RNA fragments by free RTs). Secondly, RT performs DNA-directed plus-strand DNA synthesis using the PPTs that have not been removed by RNase H as primers. PPTs and tRNA primers are then removed by RNase H. The 3' and 5' ssDNA PBS regions hybridize to form a circular dsDNA intermediate. Strand displacement synthesis by RT to the PBS and PPT ends produces a blunt ended, linear dsDNA copy of the viral genome that includes long terminal repeats (LTRs) at both ends. Functionally, catalyzes viral DNA integration into the host chromosome, by performing a series of DNA cutting and joining reactions. This enzyme activity takes place after virion entry into a cell and reverse transcription of the RNA genome in dsDNA. The first step in the integration process is 3' processing. This step requires a complex comprising the viral genome, matrix protein, Vpr and integrase. This complex is called the pre-integration complex (PIC). The integrase protein removes 2 nucleotides from each 3' end of the viral DNA, leaving recessed CA OH's at the 3' ends. In the second step, the PIC enters cell nucleus. This process is mediated through integrase and Vpr proteins, and allows the virus to infect a non dividing cell. This ability to enter the nucleus is specific of lentiviruses, other retroviruses cannot and rely on cell division to access cell chromosomes. In the third step, termed strand transfer, the integrase protein joins the previously processed 3' ends to the 5' ends of strands of target cellular DNA at the site of integration. The 5'-ends are produced by integrase-catalyzed staggered cuts, 5 bp apart. A Y-shaped, gapped, recombination intermediate results, with the 5'-ends of the viral DNA strands and the 3' ends of target DNA strands remaining unjoined, flanking a gap of 5 bp. The last step is viral DNA integration into host chromosome. This involves host DNA repair synthesis in which the 5 bp gaps between the unjoined strands are filled in and then ligated. Since this process occurs at both cuts flanking the HIV genome, a 5 bp duplication of host DNA is produced at the ends of HIV-1 integration. Alternatively, Integrase may catalyze the excision of viral DNA just after strand transfer, this is termed disintegration. This chain is Gag-Pol polyprotein (gag-pol), found in Homo sapiens (Human).